Reading from the N-terminus, the 269-residue chain is 1,6-dihydroxycyclohexa-2,4-diene-1-carboxylate dehydrogenase (269 aa).

11–35 (VITGAAQGIGRRVAERMAAEGGRLL) is a binding site for NAD(+). Substrate is bound at residue Ser142. Tyr153 serves as the catalytic Proton acceptor.

It belongs to the short-chain dehydrogenases/reductases (SDR) family. As to quaternary structure, homodimer.

The catalysed reaction is (1R,6S)-1,6-dihydroxycyclohexa-2,4-diene-1-carboxylate + NAD(+) = catechol + CO2 + NADH. It functions in the pathway aromatic compound metabolism; benzoate degradation via hydroxylation; catechol from benzoate: step 2/2. Its function is as follows. Degradation of 2-hydro-1,2-dihydroxy benzoate (DHB) to catechol. The chain is 1,6-dihydroxycyclohexa-2,4-diene-1-carboxylate dehydrogenase (xylL) from Pseudomonas putida (Arthrobacter siderocapsulatus).